The chain runs to 255 residues: 4-hydroxy-tetrahydrodipicolinate reductase (255 aa).

Residues 8–13 (GANGRV), 88–90 (GTT), and 112–115 (ATNM) contribute to the NAD(+) site. Histidine 144 acts as the Proton donor/acceptor in catalysis. Histidine 145 provides a ligand contact to (S)-2,3,4,5-tetrahydrodipicolinate. Lysine 148 functions as the Proton donor in the catalytic mechanism. 154–155 (GT) serves as a coordination point for (S)-2,3,4,5-tetrahydrodipicolinate.

It belongs to the DapB family.

The protein resides in the cytoplasm. It catalyses the reaction (S)-2,3,4,5-tetrahydrodipicolinate + NAD(+) + H2O = (2S,4S)-4-hydroxy-2,3,4,5-tetrahydrodipicolinate + NADH + H(+). The enzyme catalyses (S)-2,3,4,5-tetrahydrodipicolinate + NADP(+) + H2O = (2S,4S)-4-hydroxy-2,3,4,5-tetrahydrodipicolinate + NADPH + H(+). Its pathway is amino-acid biosynthesis; L-lysine biosynthesis via DAP pathway; (S)-tetrahydrodipicolinate from L-aspartate: step 4/4. Functionally, catalyzes the conversion of 4-hydroxy-tetrahydrodipicolinate (HTPA) to tetrahydrodipicolinate. The sequence is that of 4-hydroxy-tetrahydrodipicolinate reductase from Sulfurimonas denitrificans (strain ATCC 33889 / DSM 1251) (Thiomicrospira denitrificans (strain ATCC 33889 / DSM 1251)).